A 256-amino-acid polypeptide reads, in one-letter code: ATP synthase peripheral stalk subunit b, mitochondrial (256 aa).

The transit peptide at 1–42 (MLSRVVLSAAAAAAPSLKNAALLGPGVLQATRIFHTGQPSLA) directs the protein to the mitochondrion. Lys-131 bears the N6-succinyllysine mark. N6-acetyllysine occurs at positions 139, 154, 162, 221, 233, and 244.

It belongs to the eukaryotic ATPase B chain family. As to quaternary structure, component of the ATP synthase complex composed at least of ATP5F1A/subunit alpha, ATP5F1B/subunit beta, ATP5MC1/subunit c (homooctomer), MT-ATP6/subunit a, MT-ATP8/subunit 8, ATP5ME/subunit e, ATP5MF/subunit f, ATP5MG/subunit g, ATP5MK/subunit k, ATP5MJ/subunit j, ATP5F1C/subunit gamma, ATP5F1D/subunit delta, ATP5F1E/subunit epsilon, ATP5PF/subunit F6, ATP5PB/subunit b, ATP5PD/subunit d, ATP5PO/subunit OSCP. ATP synthase complex consists of a soluble F(1) head domain (subunits alpha(3) and beta(3)) - the catalytic core - and a membrane F(0) domain - the membrane proton channel (subunits c, a, 8, e, f, g, k and j). These two domains are linked by a central stalk (subunits gamma, delta, and epsilon) rotating inside the F1 region and a stationary peripheral stalk (subunits F6, b, d, and OSCP).

The protein resides in the mitochondrion. It localises to the mitochondrion inner membrane. Subunit b, of the mitochondrial membrane ATP synthase complex (F(1)F(0) ATP synthase or Complex V) that produces ATP from ADP in the presence of a proton gradient across the membrane which is generated by electron transport complexes of the respiratory chain. ATP synthase complex consist of a soluble F(1) head domain - the catalytic core - and a membrane F(1) domain - the membrane proton channel. These two domains are linked by a central stalk rotating inside the F(1) region and a stationary peripheral stalk. During catalysis, ATP synthesis in the catalytic domain of F(1) is coupled via a rotary mechanism of the central stalk subunits to proton translocation. In vivo, can only synthesize ATP although its ATP hydrolase activity can be activated artificially in vitro. Part of the complex F(0) domain. Part of the complex F(0) domain and the peripheric stalk, which acts as a stator to hold the catalytic alpha(3)beta(3) subcomplex and subunit a/ATP6 static relative to the rotary elements. The sequence is that of ATP synthase peripheral stalk subunit b, mitochondrial from Bos taurus (Bovine).